A 397-amino-acid polypeptide reads, in one-letter code: Argininosuccinate synthase (397 aa).

7–15 (LYSGGLDTS) serves as a coordination point for ATP. Residue Y83 participates in L-citrulline binding. G113 is a binding site for ATP. Residues T115, N119, and D120 each contribute to the L-aspartate site. Position 119 (N119) interacts with L-citrulline. 5 residues coordinate L-citrulline: R123, S169, S178, E253, and Y265.

The protein belongs to the argininosuccinate synthase family. Type 1 subfamily. Homotetramer.

It localises to the cytoplasm. It carries out the reaction L-citrulline + L-aspartate + ATP = 2-(N(omega)-L-arginino)succinate + AMP + diphosphate + H(+). The protein operates within amino-acid biosynthesis; L-arginine biosynthesis; L-arginine from L-ornithine and carbamoyl phosphate: step 2/3. This chain is Argininosuccinate synthase, found in Thermoplasma volcanium (strain ATCC 51530 / DSM 4299 / JCM 9571 / NBRC 15438 / GSS1).